Consider the following 141-residue polypeptide: Putative antiporter subunit mnhB2 (141 aa).

4 consecutive transmembrane segments (helical) span residues 10–30, 35–55, 70–90, and 116–136; these read SVTKIVVFILLTFGFYVFFAG, GGGFIGGLIFSSAFILMFLAF, KLMIIGSLISVATASVPMFFG, and LFELGILLTVVGVIVTVMLSI.

This sequence belongs to the CPA3 antiporters (TC 2.A.63) subunit B family. In terms of assembly, may form a heterooligomeric complex that consists of seven subunits: mnhA2, mnhB2, mnhC2, mnhD2, mnhE2, mnhF2 and mnhG2.

The protein localises to the cell membrane. The chain is Putative antiporter subunit mnhB2 (mnhB2) from Staphylococcus epidermidis (strain ATCC 35984 / DSM 28319 / BCRC 17069 / CCUG 31568 / BM 3577 / RP62A).